The following is a 193-amino-acid chain: MAAIRKKLVIVGDGACGKTCLLIVFSKDQFPEVYVPTVFENYVADIEVDGKQVELALWDTAGQEDYDRLRPLSYPDTDVILMCFSIDSPDSLENIPEKWTPEVKHFCPNVPIILVGNKKDLRNDEHTRRELAKMKQEPVKPEEGRDMANRIGAFGYMECSAKTKDGVREVFEMATRAALQARRGKKKSGCLVL.

Residues 12 to 19 (GDGACGKT) and 30 to 37 (FPEVYVPT) contribute to the GTP site. Residues 34–42 (YVPTVFENY) carry the Effector region motif. Asparagine 41 is modified ((Microbial infection) ADP-ribosylasparagine; by botulinum toxin). Residues 59-63 (DTAGQ) and 117-120 (NKKD) contribute to the GTP site. Residues 61–78 (AGQEDYDRLRPLSYPDTD) form a switch II region; involved in RAP1GDS1 isoform 2 binding region. Glutamine 63 carries the post-translational modification 5-glutamyl serotonin. Residue lysine 135 forms a Glycyl lysine isopeptide (Lys-Gly) (interchain with G-Cter in ubiquitin) linkage. 160–162 (SAK) contacts GTP. Serine 188 is subject to Phosphoserine; by PKG/PRKG1. A Cysteine methyl ester modification is found at cysteine 190. Cysteine 190 carries the S-geranylgeranyl cysteine lipid modification. Residues 191–193 (LVL) constitute a propeptide, removed in mature form.

The protein belongs to the small GTPase superfamily. Rho family. As to quaternary structure, interacts with ARHGEF28. Interacts (via GTP-bound form) with RIPOR1 (via N-terminus); this interaction links RHOA to STK24 and STK26 kinases. Interacts with RIPOR2 (via active GTP- or inactive GDP-bound forms) isoform 1 and isoform 2; these interactions are direct, block the loading of GTP to RHOA and decrease upon chemokine CCL19 stimulation in primary T lymphocytes. Binds PRKCL1, ROCK1 and ROCK2. Interacts with ARHGEF2, ARHGEF3, NET1 and RTKN. Interacts with PLCE1 and AKAP13. Interacts with DIAPH1. Interacts (in the constitutively activated, GTP-bound form) with DGKQ. Interacts with RACK1; enhances RHOA activation. Interacts with PKP4; the interaction is detected at the midbody. Interacts (GTP-bound form preferentially) with PKN2; the interaction stimulates autophosphorylation and phosphorylation of PKN2. Interacts with ARHGDIA; this interaction inactivates and stabilizes RHOA. Interacts with ARHGDIB. Interacts (GTP-bound form) with KCNA2 (via cytoplasmic N-terminal domain). Interacts (GTP-bound form) with ECT2; the interaction results in allosteric activation of ECT2. Interacts with RAP1GDS1; the interaction is direct and in a 1:1 stoichiometry. The cofactor is Mg(2+). In terms of processing, phosphorylation by PRKG1 at Ser-188 inactivates RHOA signaling. Phosphorylation by SLK at Ser-188 in response to AGTR2 activation. Ubiquitinated by the BCR(KCTD13) and BCR(TNFAIP1) E3 ubiquitin ligase complexes, leading to its degradation by the proteasome, thereby regulating the actin cytoskeleton and synaptic transmission in neurons. Ubiquitinated at Lys-135 in a FBXL19-mediated manner; leading to proteasomal degradation. Post-translationally, serotonylation of Gln-63 by TGM2 during activation and aggregation of platelets leads to constitutive activation of GTPase activity.

It is found in the cell membrane. It localises to the cytoplasm. Its subcellular location is the cytoskeleton. The protein resides in the cleavage furrow. The protein localises to the cell cortex. It is found in the midbody. It localises to the cell projection. Its subcellular location is the lamellipodium. The protein resides in the dendrite. The protein localises to the nucleus. It catalyses the reaction GTP + H2O = GDP + phosphate + H(+). Regulated by guanine nucleotide exchange factors (GEFs) which promote the exchange of bound GDP for free GTP, GTPase activating proteins (GAPs) which increase the GTP hydrolysis activity and GDP dissociation inhibitors which inhibit the dissociation of the nucleotide from the GTPase. Activated by GEFs such as ARHGEF2, ARHGEF3, ARHGEF28 and BCR. Inhibited by GAPs such as ARHGAP30. Inhibited by GDP dissociation inhibitors such as ARHGDIA. Its function is as follows. Small GTPase which cycles between an active GTP-bound and an inactive GDP-bound state. Mainly associated with cytoskeleton organization, in active state binds to a variety of effector proteins to regulate cellular responses such as cytoskeletal dynamics, cell migration and cell cycle. Regulates a signal transduction pathway linking plasma membrane receptors to the assembly of focal adhesions and actin stress fibers. Involved in a microtubule-dependent signal that is required for the myosin contractile ring formation during cell cycle cytokinesis. Plays an essential role in cleavage furrow formation. Required for the apical junction formation of keratinocyte cell-cell adhesion. Essential for the SPATA13-mediated regulation of cell migration and adhesion assembly and disassembly. The MEMO1-RHOA-DIAPH1 signaling pathway plays an important role in ERBB2-dependent stabilization of microtubules at the cell cortex. It controls the localization of APC and CLASP2 to the cell membrane, via the regulation of GSK3B activity. In turn, membrane-bound APC allows the localization of the MACF1 to the cell membrane, which is required for microtubule capture and stabilization. Regulates KCNA2 potassium channel activity by reducing its location at the cell surface in response to CHRM1 activation; promotes KCNA2 endocytosis. Acts as an allosteric activator of guanine nucleotide exchange factor ECT2 by binding in its activated GTP-bound form to the PH domain of ECT2 which stimulates the release of PH inhibition and promotes the binding of substrate RHOA to the ECT2 catalytic center. May be an activator of PLCE1. In neurons, involved in the inhibition of the initial spine growth. Upon activation by CaMKII, modulates dendritic spine structural plasticity by relaying CaMKII transient activation to synapse-specific, long-term signaling. Acts as a regulator of platelet alpha-granule release during activation and aggregation of platelets. When activated by DAAM1 may signal centrosome maturation and chromosomal segregation during cell division. May also be involved in contractile ring formation during cytokinesis. This Bos taurus (Bovine) protein is Transforming protein RhoA (RHOA).